Here is a 427-residue protein sequence, read N- to C-terminus: MKKICYVLLSLVCVFLFSGCSAGEEASGKKEDVTLRIAWWGGQPRHDYTTKVIELYEKKNPHVHIEAEFANWDDYWKKLAPMSAAGQLPDVIQMDTAYLAQYGKKNQLEDLTPYTKDGTIDVSSIDENMLSGGKIDNKLYGFTLGVNVLSVIANEDLLKKAGVSINQENWTWEDYEKLAYDLQEKAGVYGSNGMHPPDIFFPYYLRTKGERFYKEDGTGLAYQDDQLFVDYFERQLRLVKAKTSPTPDESAQIKGMEDDFIVKGKSAITWNYSNQYLGFARLTDSPLSLYLPPEQMQEKALTLKPSMLFSIPKSSEHKKEAAKFINFFVNNEEANQLIKGERGVPVSDKVADAIKPKLNEEETNIVEYVETASKNISKADPPEPVGSAEVIKLLKDTSDQILYQKVSPEKAAKTFRKKANEILERNN.

This sequence belongs to the bacterial solute-binding protein 1 family.

In terms of biological role, may play a role in the degradation of type I rhamnogalacturonan derived from plant cell walls. This chain is Putative ABC transporter substrate-binding protein YesO (yesO), found in Bacillus subtilis (strain 168).